A 508-amino-acid chain; its full sequence is Photosystem II CP47 reaction center protein (508 aa).

6 helical membrane-spanning segments follow: residues 21–36 (SVHI…WAGS), 101–115 (IVFS…IWHW), 140–156 (GIHL…FGAF), 203–218 (IAAG…FHLS), 237–252 (VLSS…AFVV), and 457–472 (TFAL…HGAR).

The protein belongs to the PsbB/PsbC family. PsbB subfamily. As to quaternary structure, PSII is composed of 1 copy each of membrane proteins PsbA, PsbB, PsbC, PsbD, PsbE, PsbF, PsbH, PsbI, PsbJ, PsbK, PsbL, PsbM, PsbT, PsbX, PsbY, PsbZ, Psb30/Ycf12, at least 3 peripheral proteins of the oxygen-evolving complex and a large number of cofactors. It forms dimeric complexes. It depends on Binds multiple chlorophylls. PSII binds additional chlorophylls, carotenoids and specific lipids. as a cofactor.

The protein resides in the plastid. The protein localises to the chloroplast thylakoid membrane. One of the components of the core complex of photosystem II (PSII). It binds chlorophyll and helps catalyze the primary light-induced photochemical processes of PSII. PSII is a light-driven water:plastoquinone oxidoreductase, using light energy to abstract electrons from H(2)O, generating O(2) and a proton gradient subsequently used for ATP formation. The protein is Photosystem II CP47 reaction center protein of Oryza nivara (Indian wild rice).